We begin with the raw amino-acid sequence, 158 residues long: Cysteine proteinase inhibitor 4 (158 aa).

A signal peptide spans 1-24 (MAARCPVGVASVLLLIVLVTVASA). Residues 26 to 51 (SGARSGGGGGGGIRELRGGGAGRRVG) are disordered. A compositionally biased stretch (gly residues) spans 29–49 (RSGGGGGGGIRELRGGGAGRR). Positions 51-116 (GGRTEVRDVE…KYYLRVAAAE (66 aa)) constitute a Cystatin domain. Positions 101-105 (QVVSG) match the Secondary area of contact motif.

The protein belongs to the cystatin family. Phytocystatin subfamily.

The protein localises to the secreted. Specific inhibitor of cysteine proteinases. Probably involved in the regulation of endogenous processes and in defense against pests and pathogens. The polypeptide is Cysteine proteinase inhibitor 4 (Oryza sativa subsp. japonica (Rice)).